The primary structure comprises 958 residues: Glucoamylase 1 (958 aa).

The first 22 residues, 1–22, serve as a signal peptide directing secretion; the sequence is MIFLKLIKSIVIGLGLVSAIQA. Residues Asn61, Asn78, Asn107, Asn197, Asn403, and Asn416 are each glycosylated (N-linked (GlcNAc...) asparagine). Active-site residues include Asp470 and Glu473. 3 N-linked (GlcNAc...) asparagine glycosylation sites follow: Asn513, Asn580, and Asn602. Asp638 serves as the catalytic Proton donor. 2 N-linked (GlcNAc...) asparagine glycosylation sites follow: Asn813 and Asn907.

Belongs to the glycosyl hydrolase 31 family.

The enzyme catalyses Hydrolysis of terminal (1-&gt;4)-linked alpha-D-glucose residues successively from non-reducing ends of the chains with release of beta-D-glucose.. In terms of biological role, this glucoamylase has a specificity toward both alpha-1,4 and alpha-1,6 linkages. This is Glucoamylase 1 (GAM1) from Schwanniomyces occidentalis (Yeast).